The following is a 32-amino-acid chain: Fimbrin sef21 (32 aa).

The protein resides in the fimbrium. This is Fimbrin sef21 from Salmonella enteritidis.